The chain runs to 421 residues: Fumarylacetoacetase (421 aa).

A Ca(2+)-binding site is contributed by aspartate 131. The Proton acceptor role is filled by histidine 138. Residue arginine 147 coordinates substrate. 3 residues coordinate Ca(2+): glutamate 204, glutamate 206, and aspartate 238. Residue aspartate 238 coordinates Mg(2+). Residues glutamine 245 and tyrosine 249 each coordinate substrate. The Mg(2+) site is built by lysine 258 and threonine 262. Substrate is bound at residue threonine 355.

The protein belongs to the FAH family. The cofactor is Ca(2+). It depends on Mg(2+) as a cofactor.

It carries out the reaction 4-fumarylacetoacetate + H2O = acetoacetate + fumarate + H(+). The protein operates within amino-acid degradation; L-phenylalanine degradation; acetoacetate and fumarate from L-phenylalanine: step 6/6. Functionally, converts fumarylacetoacetate to acetoacetate and fumarate. Involved in tyrosine catabolic pathway. Catalyzes the final step in the tyrosine degradation pathway. The chain is Fumarylacetoacetase from Arabidopsis thaliana (Mouse-ear cress).